The primary structure comprises 284 residues: 2-dehydro-3-deoxyphosphooctonate aldolase (284 aa).

This sequence belongs to the KdsA family.

It is found in the cytoplasm. It catalyses the reaction D-arabinose 5-phosphate + phosphoenolpyruvate + H2O = 3-deoxy-alpha-D-manno-2-octulosonate-8-phosphate + phosphate. Its pathway is carbohydrate biosynthesis; 3-deoxy-D-manno-octulosonate biosynthesis; 3-deoxy-D-manno-octulosonate from D-ribulose 5-phosphate: step 2/3. It participates in bacterial outer membrane biogenesis; lipopolysaccharide biosynthesis. The polypeptide is 2-dehydro-3-deoxyphosphooctonate aldolase (Burkholderia cenocepacia (strain HI2424)).